Reading from the N-terminus, the 810-residue chain is Glycerol-3-phosphate acyltransferase (810 aa).

Positions 305–310 (CHRSHI) match the HXXXXD motif motif.

This sequence belongs to the GPAT/DAPAT family.

It localises to the cell inner membrane. It carries out the reaction sn-glycerol 3-phosphate + an acyl-CoA = a 1-acyl-sn-glycero-3-phosphate + CoA. It participates in phospholipid metabolism; CDP-diacylglycerol biosynthesis; CDP-diacylglycerol from sn-glycerol 3-phosphate: step 1/3. The protein is Glycerol-3-phosphate acyltransferase of Haemophilus influenzae (strain PittEE).